Here is a 631-residue protein sequence, read N- to C-terminus: Golgin subfamily A member 8R (631 aa).

Residues M1–L72 form a disordered region. Positions T38–G50 are enriched in polar residues. Coiled-coil stretches lie at residues V85 to L149, E209 to G247, and S303 to M419. Disordered regions lie at residues P422 to S451, A502 to E523, and N551 to P610. A compositionally biased stretch (gly residues) spans L507–G519. Positions A568–E577 are enriched in basic and acidic residues.

Belongs to the GOLGA8 family.

In Homo sapiens (Human), this protein is Golgin subfamily A member 8R.